The chain runs to 260 residues: Glutamate racemase (260 aa).

Substrate contacts are provided by residues 14–15 (DS) and 46–47 (YG). The active-site Proton donor/acceptor is the C77. 78–79 (NT) is a binding site for substrate. C188 functions as the Proton donor/acceptor in the catalytic mechanism. Position 189 to 190 (189 to 190 (TH)) interacts with substrate.

This sequence belongs to the aspartate/glutamate racemases family.

It catalyses the reaction L-glutamate = D-glutamate. Its pathway is cell wall biogenesis; peptidoglycan biosynthesis. In terms of biological role, provides the (R)-glutamate required for cell wall biosynthesis. In Clostridium perfringens (strain ATCC 13124 / DSM 756 / JCM 1290 / NCIMB 6125 / NCTC 8237 / Type A), this protein is Glutamate racemase.